We begin with the raw amino-acid sequence, 415 residues long: SNF1 protein kinase subunit beta-2 (415 aa).

3 disordered regions span residues 1–43, 55–158, and 249–276; these read MGTT…EMDA, KCSD…PSEI, and EKNP…SSIA. Glycine 2 carries N-myristoyl glycine lipidation. Residues 9 to 19 are compositionally biased toward basic residues; that stretch reads AQKKQTTKKCR. Over residues 55–69 the composition is skewed to polar residues; that stretch reads KCSDSQDAGQPSREG. Residue serine 66 is modified to Phosphoserine. Composition is skewed to basic and acidic residues over residues 122 to 150 and 249 to 264; these read PKQD…RAKE and EKNP…EADS. Residues 154–335 form a kinase-interacting sequence (KIS); required for interaction with SNF1 region; the sequence is GPSEIKSSLM…LDRQQSNTDT (182 aa). Position 298 is a phosphoserine (serine 298). The interval 336-415 is association with SNF1 kinase complex (ASC) domain; required for interaction with SNF4; it reads SWLTPPQLPP…QILYTPIESS (80 aa).

It belongs to the 5'-AMP-activated protein kinase beta subunit family. Component of the SNF1 kinase complex, a heterotrimeric complex composed of the catalytic alpha subunit SNF1, one of the three related beta subunits SIP1, SIP2 or GAL83, and the regulatory gamma subunit SNF4. The beta subunit serves as a bridge between the catalytic and the regulatory subunit. Interacts (via KIS domain) with SNF1. Interacts (via ASC domain) with SNF4. In terms of processing, phosphorylated by SNF1 in vitro.

Its subcellular location is the cytoplasm. It localises to the cell membrane. Its function is as follows. Beta subunit of the SNF1 kinase complex, which is required for transcriptional, metabolic, and developmental adaptations in response to glucose limitation. Has a structural role, mediating heterotrimer formation, and a regulatory role, defining carbon source-regulated subcellular location and substrate specificity of the SNF1 kinase complex. Involved in the regulation of aging. Acts as a negative regulator of nuclear SNF1 activity in young cells by sequestering its activating gamma subunit at the plasma membrane. The chain is SNF1 protein kinase subunit beta-2 (SIP2) from Saccharomyces cerevisiae (strain ATCC 204508 / S288c) (Baker's yeast).